Consider the following 152-residue polypeptide: D-aminoacyl-tRNA deacylase (152 aa).

A Gly-cisPro motif, important for rejection of L-amino acids motif is present at residues 142–143 (GP).

Belongs to the DTD family. Homodimer.

The protein resides in the cytoplasm. The catalysed reaction is glycyl-tRNA(Ala) + H2O = tRNA(Ala) + glycine + H(+). It carries out the reaction a D-aminoacyl-tRNA + H2O = a tRNA + a D-alpha-amino acid + H(+). An aminoacyl-tRNA editing enzyme that deacylates mischarged D-aminoacyl-tRNAs. Also deacylates mischarged glycyl-tRNA(Ala), protecting cells against glycine mischarging by AlaRS. Acts via tRNA-based rather than protein-based catalysis; rejects L-amino acids rather than detecting D-amino acids in the active site. By recycling D-aminoacyl-tRNA to D-amino acids and free tRNA molecules, this enzyme counteracts the toxicity associated with the formation of D-aminoacyl-tRNA entities in vivo and helps enforce protein L-homochirality. The protein is D-aminoacyl-tRNA deacylase of Paraburkholderia xenovorans (strain LB400).